A 370-amino-acid polypeptide reads, in one-letter code: Queuine tRNA-ribosyltransferase (370 aa).

The active-site Proton acceptor is D92. Residues D92–F96, D146, Q190, and G217 each bind substrate. An RNA binding region spans residues G248–N254. D267 serves as the catalytic Nucleophile. Zn(2+)-binding residues include C305, C307, C310, and H336.

This sequence belongs to the queuine tRNA-ribosyltransferase family. As to quaternary structure, homodimer. Within each dimer, one monomer is responsible for RNA recognition and catalysis, while the other monomer binds to the replacement base PreQ1. Zn(2+) is required as a cofactor.

The enzyme catalyses 7-aminomethyl-7-carbaguanine + guanosine(34) in tRNA = 7-aminomethyl-7-carbaguanosine(34) in tRNA + guanine. It functions in the pathway tRNA modification; tRNA-queuosine biosynthesis. Its function is as follows. Catalyzes the base-exchange of a guanine (G) residue with the queuine precursor 7-aminomethyl-7-deazaguanine (PreQ1) at position 34 (anticodon wobble position) in tRNAs with GU(N) anticodons (tRNA-Asp, -Asn, -His and -Tyr). Catalysis occurs through a double-displacement mechanism. The nucleophile active site attacks the C1' of nucleotide 34 to detach the guanine base from the RNA, forming a covalent enzyme-RNA intermediate. The proton acceptor active site deprotonates the incoming PreQ1, allowing a nucleophilic attack on the C1' of the ribose to form the product. After dissociation, two additional enzymatic reactions on the tRNA convert PreQ1 to queuine (Q), resulting in the hypermodified nucleoside queuosine (7-(((4,5-cis-dihydroxy-2-cyclopenten-1-yl)amino)methyl)-7-deazaguanosine). The protein is Queuine tRNA-ribosyltransferase of Desulforapulum autotrophicum (strain ATCC 43914 / DSM 3382 / VKM B-1955 / HRM2) (Desulfobacterium autotrophicum).